A 299-amino-acid chain; its full sequence is Leucine zipper transcription factor-like protein 1 (299 aa).

Residues 96–296 are a coiled coil; sequence LKLQTDISEL…DLRKRLAKYE (201 aa). An interaction with BSS9 region spans residues 145–299; sequence GAAELLNKEI…KRLAKYEPED (155 aa).

The protein belongs to the LZTFL1 family. In terms of assembly, self-associates. Interacts with BBS9; the interaction mediates the association of LZTL1 with the BBsome complex and regulates BBSome ciliary trafficking.

The protein resides in the cytoplasm. In terms of biological role, regulates ciliary localization of the BBSome complex. Together with the BBSome complex, controls SMO ciliary trafficking and contributes to the sonic hedgehog (SHH) pathway regulation. May play a role in neurite outgrowth. May have tumor suppressor function. This is Leucine zipper transcription factor-like protein 1 (LZTFL1) from Bos taurus (Bovine).